A 179-amino-acid polypeptide reads, in one-letter code: Large ribosomal subunit protein uL6 (179 aa).

This sequence belongs to the universal ribosomal protein uL6 family. As to quaternary structure, part of the 50S ribosomal subunit.

Functionally, this protein binds to the 23S rRNA, and is important in its secondary structure. It is located near the subunit interface in the base of the L7/L12 stalk, and near the tRNA binding site of the peptidyltransferase center. The chain is Large ribosomal subunit protein uL6 from Mycobacterium tuberculosis (strain ATCC 25618 / H37Rv).